We begin with the raw amino-acid sequence, 460 residues long: tRNA(Ile)-lysidine synthase (460 aa).

30-35 lines the ATP pocket; it reads SGGLDS.

The protein belongs to the tRNA(Ile)-lysidine synthase family.

The protein resides in the cytoplasm. The catalysed reaction is cytidine(34) in tRNA(Ile2) + L-lysine + ATP = lysidine(34) in tRNA(Ile2) + AMP + diphosphate + H(+). Functionally, ligates lysine onto the cytidine present at position 34 of the AUA codon-specific tRNA(Ile) that contains the anticodon CAU, in an ATP-dependent manner. Cytidine is converted to lysidine, thus changing the amino acid specificity of the tRNA from methionine to isoleucine. The polypeptide is tRNA(Ile)-lysidine synthase (Yersinia pseudotuberculosis serotype I (strain IP32953)).